A 142-amino-acid chain; its full sequence is Large ribosomal subunit protein uL23 (142 aa).

It belongs to the universal ribosomal protein uL23 family.

Its function is as follows. This protein binds to a specific region on the 26S rRNA. In Cyberlindnera jadinii (Torula yeast), this protein is Large ribosomal subunit protein uL23 (RPL25).